The sequence spans 146 residues: Myoglobin (146 aa).

The 140-residue stretch at 2 to 141 (GDFDMVLKFW…IIADIDATYK (140 aa)) folds into the Globin domain. Histidine 60 provides a ligand contact to nitrite. Histidine 60 contributes to the O2 binding site. Histidine 89 is a binding site for heme b.

This sequence belongs to the globin family. As to quaternary structure, monomeric.

It localises to the cytoplasm. It is found in the sarcoplasm. The catalysed reaction is Fe(III)-heme b-[protein] + nitric oxide + H2O = Fe(II)-heme b-[protein] + nitrite + 2 H(+). The enzyme catalyses H2O2 + AH2 = A + 2 H2O. In terms of biological role, monomeric heme protein which primary function is to store oxygen and facilitate its diffusion within muscle tissues. Reversibly binds oxygen through a pentacoordinated heme iron and enables its timely and efficient release as needed during periods of heightened demand. Depending on the oxidative conditions of tissues and cells, and in addition to its ability to bind oxygen, it also has a nitrite reductase activity whereby it regulates the production of bioactive nitric oxide. Under stress conditions, like hypoxia and anoxia, it also protects cells against reactive oxygen species thanks to its pseudoperoxidase activity. The polypeptide is Myoglobin (mb) (Tetraodon nigroviridis (Spotted green pufferfish)).